We begin with the raw amino-acid sequence, 1219 residues long: FK506-binding protein 15 (1219 aa).

Methionine 1 carries the post-translational modification N-acetylmethionine. Serine 14 and serine 23 each carry phosphoserine. The segment at 41–66 (YTAPKQPKKGQGTAATGNQATPKTAP) is disordered. The span at 53 to 66 (TAATGNQATPKTAP) shows a compositional bias: polar residues. The tract at residues 72-169 (PTILVATAVH…AVEFNKQVCI (98 aa)) is important for function in growth cone organization. The residue at position 92 (lysine 92) is an N6-acetyllysine. The PPIase FKBP-type domain maps to 197-290 (GDSLEVAYTG…VFEVEVRRVK (94 aa)). Residues 294–349 (DSGSDGHSVSSRDSAAPSPIPGADNLSADPVVSPPTSIPFKSGEPALRTKSNSLSE) form a disordered region. Serine 307, serine 311, serine 326, serine 344, serine 346, and serine 356 each carry phosphoserine. The disordered stretch occupies residues 381–433 (PQLDSNDSEIEDVNTLQGGGQPVVTPSVQPSLHPAHPALPQMTSQAPQPSVTG). The span at 421–433 (QMTSQAPQPSVTG) shows a compositional bias: polar residues. Coiled-coil stretches lie at residues 522 to 789 (AVSK…TDQA), 818 to 878 (DEHL…GVEA), and 925 to 951 (TLQLLNQQEQEKEESSSEEEEEKAEER). A Phosphoserine modification is found at serine 619. The tract at residues 739-761 (LEKNLSERKKKSAQERSQAEEEI) is disordered. The disordered stretch occupies residues 931–1219 (QQEQEKEESS…DDDDDIDWLG (289 aa)). Residues serine 939, serine 940, serine 941, and serine 956 each carry the phosphoserine modification. The span at 957-971 (QEQSASASSGQPQAP) shows a compositional bias: low complexity. Phosphoserine is present on residues serine 979, serine 1024, serine 1056, serine 1061, serine 1065, and serine 1097. Residues 1090 to 1100 (QESSTRLSLTS) are compositionally biased toward polar residues. At threonine 1099 the chain carries Phosphothreonine. Serine 1114 is modified (phosphoserine). Residues 1123-1139 (LKKDDVTSSTGPHKELS) are compositionally biased toward basic and acidic residues. Residues serine 1158, serine 1161, serine 1162, serine 1164, and serine 1195 each carry the phosphoserine modification. Threonine 1203 carries the post-translational modification Phosphothreonine. Positions 1207-1219 (GDDDDDDDIDWLG) are enriched in acidic residues.

It belongs to the FKBP-type PPIase family. In terms of assembly, interacts with WIP and actin. Interacts with TBC1D23.

The protein localises to the cytoplasm. Its subcellular location is the cell projection. The protein resides in the axon. It localises to the early endosome. Its function is as follows. May be involved in the cytoskeletal organization of neuronal growth cones. Seems to be inactive as a PPIase. Involved in the transport of early endosomes at the level of transition between microfilament-based and microtubule-based movement. The polypeptide is FK506-binding protein 15 (FKBP15) (Homo sapiens (Human)).